Here is a 232-residue protein sequence, read N- to C-terminus: GTP cyclohydrolase 1 (232 aa).

Residues 1 to 24 are disordered; sequence MSDNLKSYQDNHIENEDEEIYERS. Residues Cys121, His124, and Cys192 each coordinate Zn(2+).

This sequence belongs to the GTP cyclohydrolase I family. As to quaternary structure, toroid-shaped homodecamer, composed of two pentamers of five dimers.

It carries out the reaction GTP + H2O = 7,8-dihydroneopterin 3'-triphosphate + formate + H(+). Its pathway is cofactor biosynthesis; 7,8-dihydroneopterin triphosphate biosynthesis; 7,8-dihydroneopterin triphosphate from GTP: step 1/1. Its function is as follows. First enzyme in the biosynthesis of tetrahydrobiopterin (BH4). Catalyzes the conversion of GTP into dihydroneopterin triphosphate (7,8-dihydroneopterin 3'-triphosphate), which is subsequently catalyzed by 6-pyruvoyltetrahydropterin synthase (ptsA) and sepiapterin reductase (sprA). This Dictyostelium discoideum (Social amoeba) protein is GTP cyclohydrolase 1 (gchA).